A 264-amino-acid chain; its full sequence is Protein OXIDATIVE STRESS 3 LIKE 1 (264 aa).

2 disordered regions span residues 1 to 76 and 178 to 225; these read MDCV…GPLE and TGEG…QGSF. Positions 29-43 are enriched in low complexity; the sequence is PSDSSSSPSSSASSS. Positions 47–56 are enriched in basic and acidic residues; it reads NSDDGEKSSE. The span at 57–67 shows a compositional bias: acidic residues; the sequence is DGGDDAGENEV. Over residues 179 to 201 the composition is skewed to low complexity; the sequence is GEGSSSGGDSSPGSSPTTSGSPP. Residues 203–212 are compositionally biased toward basic residues; that stretch reads QLHHHQHQMK.

The protein localises to the nucleus. Promotes slightly the tolerance to zinc (Zn) and to oxidizing chemicals (e.g. diamide). This Arabidopsis thaliana (Mouse-ear cress) protein is Protein OXIDATIVE STRESS 3 LIKE 1.